The primary structure comprises 368 residues: Terpene cyclase penA (368 aa).

6 consecutive transmembrane segments (helical) span residues 10 to 30 (IILA…NGFI), 81 to 101 (LSLY…ILLM), 118 to 138 (LTGL…LLAM), 192 to 212 (LFIA…GIAH), 233 to 253 (FALA…FLSI), and 334 to 354 (LATM…YWTA).

This sequence belongs to the membrane-bound ascI terpene cyclase family.

Its subcellular location is the membrane. It participates in secondary metabolite biosynthesis. In terms of biological role, part of the gene cluster that mediates the biosynthesis of the indole diterpenes penitrems. The geranylgeranyl diphosphate (GGPP) synthase penG catalyzes the first step in penitrem biosynthesis via conversion of farnesyl pyrophosphate and isopentyl pyrophosphate into geranylgeranyl pyrophosphate (GGPP). Condensation of indole-3-glycerol phosphate with GGPP by the prenyl transferase penC then forms 3-geranylgeranylindole (3-GGI). Epoxidation by the FAD-dependent monooxygenase penM leads to a epoxidized-GGI that is substrate of the terpene cyclase penB for cyclization to yield paspaline. Paspaline is subsequently converted to 13-desoxypaxilline by the cytochrome P450 monooxygenase penP, the latter being then converted to paxilline by the cytochrome P450 monooxygenase penQ. Paxilline is converted to beta-paxitriol via C-10 ketoreduction by the short-chain dehydrogenase PC-15 which can be monoprenylated at the C-20 by the indole diterpene prenyltransferase penD. A two-step elimination (acetylation and elimination) process performed by the O-acetyltransferase PC-16 and the P.simplicissimum ptmI-ortholog not yet identified in P.crustosum, leads to the production of the prenylated form of penijanthine. The FAD-linked oxidoreductase ptmO then converts the prenylated form of penijanthine into PC-M5 which is in turn transformed into PC-M4 by the aromatic dimethylallyltransferase PC-22. A series of oxidation steps involving 4 cytochrome P450 monooxygenases (PC-21, PC-05, PC-23, PC-20) and a FAD-dependent monooxygenase (PC-14) are required for the transformation of PC-M4 to penitrems A and E. Synthesis of these final products is proposed to proceed via penitrems D and C (PC-21, PC-05, PC-14) and penitrems B and F (PC-21, PC-05, PC-14, PC-23). This Penicillium crustosum (Blue mold fungus) protein is Terpene cyclase penA.